Reading from the N-terminus, the 426-residue chain is Protein trichome birefringence-like 19 (426 aa).

The helical; Signal-anchor for type II membrane protein transmembrane segment at 15–35 threads the bilayer; sequence LLIAVTIATSLLTIIPLLYPL. The GDS motif signature appears at 142 to 144; that stretch reads GDS. The DCXHWCLPGXXDXWN motif motif lies at 388 to 402; it reads DCVHWCLPGPIDNLN.

Belongs to the PC-esterase family. TBL subfamily.

The protein resides in the membrane. May act as a bridging protein that binds pectin and other cell wall polysaccharides. Probably involved in maintaining esterification of pectins. May be involved in the specific O-acetylation of cell wall polymers. The protein is Protein trichome birefringence-like 19 (TBL19) of Arabidopsis thaliana (Mouse-ear cress).